The following is a 464-amino-acid chain: 3-deoxy-D-manno-octulosonic acid transferase (464 aa).

A helical; Signal-anchor membrane pass occupies residues 2–22 (MLLYYALSFILLPIYFIIILI). Residues 47-93 (YSLDFLHNEANKERFKGDTERRTAAYTSVREDSSTGSTSKLPLEASY) form the RPE1 insert domain. E107 functions as the Proton acceptor in the catalytic mechanism. Residues 311 to 312 (PR), 352 to 354 (FGE), and 377 to 380 (NILE) each bind CMP.

The protein belongs to the glycosyltransferase group 1 family.

It localises to the cell inner membrane. It carries out the reaction lipid IVA (E. coli) + CMP-3-deoxy-beta-D-manno-octulosonate = alpha-Kdo-(2-&gt;6)-lipid IVA (E. coli) + CMP + H(+). Its pathway is bacterial outer membrane biogenesis; LPS core biosynthesis. Functionally, involved in lipopolysaccharide (LPS) biosynthesis. Catalyzes the transfer of 3-deoxy-D-manno-octulosonate (Kdo) residue(s) from CMP-Kdo to lipid IV(A), the tetraacyldisaccharide-1,4'-bisphosphate precursor of lipid A. The chain is 3-deoxy-D-manno-octulosonic acid transferase (waaA) from Rickettsia felis (strain ATCC VR-1525 / URRWXCal2) (Rickettsia azadi).